The following is a 139-amino-acid chain: Transcription factor E (139 aa).

Residues Ile-7–Leu-91 form the HTH TFE/IIEalpha-type domain.

Belongs to the TFE family. As to quaternary structure, monomer. Interaction with RNA polymerase subunits RpoF and RpoE is necessary for Tfe stimulatory transcription activity. Able to interact with Tbp and RNA polymerase in the absence of DNA promoter. Interacts both with the preinitiation and elongation complexes.

In terms of biological role, transcription factor that plays a role in the activation of archaeal genes transcribed by RNA polymerase. Facilitates transcription initiation by enhancing TATA-box recognition by TATA-box-binding protein (Tbp), and transcription factor B (Tfb) and RNA polymerase recruitment. Not absolutely required for transcription in vitro, but particularly important in cases where Tbp or Tfb function is not optimal. It dynamically alters the nucleic acid-binding properties of RNA polymerases by stabilizing the initiation complex and destabilizing elongation complexes. Seems to translocate with the RNA polymerase following initiation and acts by binding to the non template strand of the transcription bubble in elongation complexes. The polypeptide is Transcription factor E (Nanoarchaeum equitans (strain Kin4-M)).